Here is an 885-residue protein sequence, read N- to C-terminus: Cadherin-1 (885 aa).

An N-terminal signal peptide occupies residues 1–26; sequence MGPRYGGAPALLLPLLLLLQVSSGLC. Residues 27 to 156 constitute a propeptide that is removed on maturation; it reads QEPEPCRPGF…SQHGLRRQKR (130 aa). Positions 121–131 are enriched in basic residues; the sequence is KAATHHHHHHH. Residues 121–141 form a disordered region; sequence KAATHHHHHHHDAPSKTQTEV. The Extracellular portion of the chain corresponds to 157–712; the sequence is DWVIPPISCP…YAEAGLQVPA (556 aa). Cadherin domains lie at 158–264, 265–377, 378–488, 489–597, and 607–688; these read WVIP…KPEF, TQAV…PPIF, NPTT…APIF, IPCP…GPIP, and KNPQ…VFVC. A Ca(2+)-binding site is contributed by Asp-259. An O-linked (Man...) serine glycan is attached at Ser-282. A glycan (O-linked (Man...) threonine) is linked at Thr-287. Asp-290 provides a ligand contact to Ca(2+). Residues Thr-360, Thr-472, Thr-474, and Thr-511 are each glycosylated (O-linked (Man...) threonine). An N-linked (GlcNAc...) asparagine glycan is attached at Asn-560. O-linked (Man...) threonine glycosylation is found at Thr-578, Thr-580, and Thr-582. The N-linked (GlcNAc...) asparagine glycan is linked to Asn-639. Residues 713 to 733 form a helical membrane-spanning segment; it reads ILGILGGILALLILILLLLLF. At 734–885 the chain is on the cytoplasmic side; sequence VRRRRVVKEP…ADMYGGGEDD (152 aa). The disordered stretch occupies residues 750–770; sequence DTRDNVYYYDEEGGGEEDQDF. Residues Tyr-756, Tyr-757, and Tyr-758 each carry the phosphotyrosine; by SRC modification. The segment covering 758-770 has biased composition (acidic residues); it reads YDEEGGGEEDQDF. The required for binding CTNND1 and PSEN1 stretch occupies residues 761 to 772; sequence EGGGEEDQDFDL. Residues Ser-773, Ser-796, Ser-841, Ser-843, and Ser-849 each carry the phosphoserine modification. The interval 792–811 is disordered; sequence PTLLSVPQYRPRPANPDEIG. The segment at 814–885 is required for binding alpha, beta and gamma catenins; it reads IDENLKAADT…ADMYGGGEDD (72 aa).

Homodimer; disulfide-linked. Component of an E-cadherin/ catenin adhesion complex composed of at least E-cadherin/CDH1, beta-catenin/CTNNB1 or gamma-catenin/JUP, and potentially alpha-catenin/CTNNA1; the complex is located to adherens junctions. Found in a complex composed of CDH1, RAP1A and PKP3; PKP3 acts as a scaffold protein within the complex, the complex is required for CDH1 localization to mature desmosome cell junctions. Interacts with the TRPV4 and CTNNB1 complex. Interacts with CTNND1. The stable association of CTNNA1 is controversial as CTNNA1 was shown not to bind to F-actin when assembled in the complex. Alternatively, the CTNNA1-containing complex may be linked to F-actin by other proteins such as LIMA1. Interaction with PSEN1, cleaves CDH1 resulting in the disassociation of cadherin-based adherens junctions (CAJs). Interacts with AJAP1 and DLGAP5. Interacts with TBC1D2. Interacts with LIMA1. Interacts with CAV1. Interacts with PIP5K1C. Interacts with RAB8B. Interacts with DDR1; this stabilizes CDH1 at the cell surface and inhibits its internalization. Interacts with RAPGEF2. Interacts with KLRG1. Forms a ternary complex composed of ADAM10, CADH1 and EPHA4; within the complex, CADH1 is cleaved by ADAM10 which disrupts adherens junctions. Interacts with SPEF1. Interacts with CTNNB1 and PKP2. Interacts with AMOTL2; the interaction may facilitate binding of radial actin fibers to cell junction complexes. Interacts with DSG3; the interaction is required for CDH1 localization to developing adherens junctions. During apoptosis or with calcium influx, cleaved by a membrane-bound metalloproteinase (ADAM10), PS1/gamma-secretase and caspase-3. Processing by the metalloproteinase, induced by calcium influx, causes disruption of cell-cell adhesion and the subsequent release of beta-catenin into the cytoplasm. The residual membrane-tethered cleavage product is rapidly degraded via an intracellular proteolytic pathway. Cleavage by caspase-3 releases the cytoplasmic tail resulting in disintegration of the actin microfilament system. The gamma-secretase-mediated cleavage promotes disassembly of adherens junctions. During development of the cochlear organ of Corti, cleavage by ADAM10 at adherens junctions promotes pillar cell separation. Post-translationally, N-glycosylation at Asn-639 is essential for expression, folding and trafficking. Addition of bisecting N-acetylglucosamine by MGAT3 modulates its cell membrane location. In terms of processing, ubiquitinated by a SCF complex containing SKP2, which requires prior phosphorylation by CK1/CSNK1A1. Ubiquitinated by CBLL1/HAKAI, requires prior phosphorylation at Tyr-757. O-glycosylated. O-manosylated by TMTC1, TMTC2, TMTC3 or TMTC4. Thr-287 and Thr-511 are O-mannosylated by TMTC2 or TMTC4 but not TMTC1 or TMTC3.

The protein resides in the cell junction. It localises to the adherens junction. Its subcellular location is the cell membrane. The protein localises to the endosome. It is found in the golgi apparatus. The protein resides in the trans-Golgi network. It localises to the cytoplasm. Its subcellular location is the desmosome. Functionally, cadherins are calcium-dependent cell adhesion proteins. They preferentially interact with themselves in a homophilic manner in connecting cells; cadherins may thus contribute to the sorting of heterogeneous cell types. CDH1 is involved in mechanisms regulating cell-cell adhesions, mobility and proliferation of epithelial cells. Promotes organization of radial actin fiber structure and cellular response to contractile forces, via its interaction with AMOTL2 which facilitates anchoring of radial actin fibers to CDH1 junction complexes at the cell membrane. Plays a role in the early stages of desmosome cell-cell junction formation via facilitating the recruitment of DSG2 and DSP to desmosome plaques. Has a potent invasive suppressor role. It is a ligand for integrin alpha-E/beta-7. Its function is as follows. E-Cad/CTF2 promotes non-amyloidogenic degradation of Abeta precursors. Has a strong inhibitory effect on APP C99 and C83 production. The sequence is that of Cadherin-1 (CDH1) from Canis lupus familiaris (Dog).